We begin with the raw amino-acid sequence, 138 residues long: Large ribosomal subunit protein uL16 (138 aa).

The protein belongs to the universal ribosomal protein uL16 family. As to quaternary structure, part of the 50S ribosomal subunit.

Binds 23S rRNA and is also seen to make contacts with the A and possibly P site tRNAs. In Gluconobacter oxydans (strain 621H) (Gluconobacter suboxydans), this protein is Large ribosomal subunit protein uL16.